The chain runs to 295 residues: Ribosomal RNA small subunit methyltransferase A (295 aa).

S-adenosyl-L-methionine-binding residues include Asn-33, Val-35, Gly-60, Glu-81, Asp-111, and Asn-129.

The protein belongs to the class I-like SAM-binding methyltransferase superfamily. rRNA adenine N(6)-methyltransferase family. RsmA subfamily.

It is found in the cytoplasm. It catalyses the reaction adenosine(1518)/adenosine(1519) in 16S rRNA + 4 S-adenosyl-L-methionine = N(6)-dimethyladenosine(1518)/N(6)-dimethyladenosine(1519) in 16S rRNA + 4 S-adenosyl-L-homocysteine + 4 H(+). Functionally, specifically dimethylates two adjacent adenosines (A1518 and A1519) in the loop of a conserved hairpin near the 3'-end of 16S rRNA in the 30S particle. May play a critical role in biogenesis of 30S subunits. This Streptomyces avermitilis (strain ATCC 31267 / DSM 46492 / JCM 5070 / NBRC 14893 / NCIMB 12804 / NRRL 8165 / MA-4680) protein is Ribosomal RNA small subunit methyltransferase A.